Here is a 282-residue protein sequence, read N- to C-terminus: MSSYENHQALDGLTLGKSTDYRDNYDASLLQGVPRSLNRDPLGLTADNLPFHGADIWTLYELSWLNSQGLPQVAVGHVELDYTSVNLIESKSFKLYLNSFNQTRFDTWETVRQTLERDLRACAQGNVSVRLHRLDELEGQPVAHFHGACIDDQDISIDNYQFTTDYLQHAVSGEKQVEETLVSHLLKSNCLITHQPDWGSIQIQYRGRKIDREKLLRYLVSFRHHNEFHEQCVERIFNDILRFCQPETLSVYARYTRRGGLDINPWRSNTDFVPATGRLARQ.

88 to 90 (IES) serves as a coordination point for substrate. 90-91 (SK) is a binding site for NADPH. The active-site Thioimide intermediate is C190. D197 serves as the catalytic Proton donor. 229 to 230 (HE) serves as a coordination point for substrate. NADPH is bound at residue 258–259 (RG).

The protein belongs to the GTP cyclohydrolase I family. QueF type 2 subfamily. Homodimer.

The protein resides in the cytoplasm. It catalyses the reaction 7-aminomethyl-7-carbaguanine + 2 NADP(+) = 7-cyano-7-deazaguanine + 2 NADPH + 3 H(+). Its pathway is tRNA modification; tRNA-queuosine biosynthesis. Functionally, catalyzes the NADPH-dependent reduction of 7-cyano-7-deazaguanine (preQ0) to 7-aminomethyl-7-deazaguanine (preQ1). The polypeptide is NADPH-dependent 7-cyano-7-deazaguanine reductase (Salmonella heidelberg (strain SL476)).